The sequence spans 340 residues: Biotin synthase (340 aa).

In terms of domain architecture, Radical SAM core spans 47 to 269 (SELQLSQLLS…VAVARIVCPK (223 aa)). Residues cysteine 62, cysteine 66, and cysteine 69 each contribute to the [4Fe-4S] cluster site. Residues cysteine 106, cysteine 137, cysteine 197, and arginine 273 each contribute to the [2Fe-2S] cluster site.

It belongs to the radical SAM superfamily. Biotin synthase family. In terms of assembly, homodimer. [4Fe-4S] cluster serves as cofactor. Requires [2Fe-2S] cluster as cofactor.

The catalysed reaction is (4R,5S)-dethiobiotin + (sulfur carrier)-SH + 2 reduced [2Fe-2S]-[ferredoxin] + 2 S-adenosyl-L-methionine = (sulfur carrier)-H + biotin + 2 5'-deoxyadenosine + 2 L-methionine + 2 oxidized [2Fe-2S]-[ferredoxin]. It participates in cofactor biosynthesis; biotin biosynthesis; biotin from 7,8-diaminononanoate: step 2/2. Its function is as follows. Catalyzes the conversion of dethiobiotin (DTB) to biotin by the insertion of a sulfur atom into dethiobiotin via a radical-based mechanism. The chain is Biotin synthase from Caulobacter sp. (strain K31).